The sequence spans 130 residues: Albumin-1 E (130 aa).

Residues 1 to 26 (MASVKLASLIVLFATLGMFLTKNVGA) form the signal peptide. 3 cysteine pairs are disulfide-bonded: Cys-29–Cys-46, Cys-33–Cys-48, and Cys-41–Cys-58. Propeptides lie at residues 64–69 (VFLKGN) and 123–130 (LLKSVSTA).

Post-translationally, the C-terminal glycine may be removed from PA1b.

PA1b binds to basic 7S globulin (BG) and stimulates its phosphorylation activity. Involved in the signal transduction system to regulate the growth and differentiation as a hormone peptide. Toxic to various insects through binding to a high affinity binding site in the insect gut. This Pisum sativum (Garden pea) protein is Albumin-1 E.